We begin with the raw amino-acid sequence, 624 residues long: Carbon monoxide dehydrogenase (624 aa).

Residues cysteine 37, cysteine 46, cysteine 49, cysteine 54, and cysteine 65 each contribute to the [4Fe-4S] cluster site. 6 residues coordinate [Ni-4Fe-5S] cluster: histidine 256, cysteine 292, cysteine 336, cysteine 444, cysteine 475, and cysteine 516.

It belongs to the Ni-containing carbon monoxide dehydrogenase family. As to quaternary structure, homodimer. The cofactor is [4Fe-4S] cluster. Requires [Ni-4Fe-5S] cluster as cofactor.

The catalysed reaction is CO + 2 oxidized [2Fe-2S]-[ferredoxin] + H2O = 2 reduced [2Fe-2S]-[ferredoxin] + CO2 + 2 H(+). Functionally, CODH oxidizes carbon monoxide coupled, via CooF, to the reduction of a hydrogen cation by a hydrogenase (possibly CooH). This Methanocaldococcus jannaschii (strain ATCC 43067 / DSM 2661 / JAL-1 / JCM 10045 / NBRC 100440) (Methanococcus jannaschii) protein is Carbon monoxide dehydrogenase (cooS).